The chain runs to 250 residues: MAGGGGGGGRGEGEGRAATGKRERIAIRRIDNLAARQVTFSKRRRGLFKKAEELSILCDAEVGLVVFSATGKLFQFASTSMEQIIDRYNSHSKTLQRAEPSQLDLQGEDSSTCARLKEELAETSLRLRQMRGEELHRLNVEQLQELEKSLESGLGSVLKTKSKKILDEIDGLERKRMQLIEENLRLKEQLQVSRMSRMEEMQPGPDSEIVYEEGQSSESVTNASYPRPPPDNDYSSDTSLRLGLSLFSSK.

The segment covering 1-10 (MAGGGGGGGR) has biased composition (gly residues). 2 disordered regions span residues 1–20 (MAGG…AATG) and 196–250 (SRME…FSSK). Positions 11–20 (GEGEGRAATG) are enriched in basic and acidic residues. Residues 20–80 (GKRERIAIRR…GKLFQFASTS (61 aa)) enclose the MADS-box domain. Positions 106–198 (QGEDSSTCAR…QLQVSRMSRM (93 aa)) constitute a K-box domain. Over residues 214–224 (GQSSESVTNAS) the composition is skewed to polar residues.

May interact with MADS18. As to expression, expressed in roots, shoots and developing panicles. Expressed in mature stems and leaves, flowering panicles, developing seeds, and mature seeds.

The protein localises to the nucleus. Transcription factor that modulates expressions of multiple genes involved in cell signaling and gene transcription. Plays a negative regulatory role in brassinosteroid signaling. The sequence is that of MADS-box transcription factor 47 from Oryza sativa subsp. japonica (Rice).